Consider the following 308-residue polypeptide: Sulfoquinovosyl glycerol transport system permease protein SmoG (308 aa).

Helical transmembrane passes span 28–48 (LAVL…VYPV), 92–112 (VLIT…LALL), 126–146 (SLLI…AWFF), 164–184 (GIIW…TIIW), 223–243 (ITLP…TITA), and 279–299 (LGYG…VTAV). One can recognise an ABC transmembrane type-1 domain in the interval 88 to 300 (TWNTVLITLI…ALSMCVTAVY (213 aa)).

This sequence belongs to the binding-protein-dependent transport system permease family. As to quaternary structure, the complex is probably composed of two ATP-binding proteins (SmoE), two transmembrane proteins (SmoG and SmoH) and a solute-binding protein (SmoF).

It localises to the cell inner membrane. Part of the ABC transporter complex SmoEFGH involved in sulfoquinovosyl glycerol (SQGro) uptake. Responsible for the translocation of the substrate across the membrane. This is Sulfoquinovosyl glycerol transport system permease protein SmoG from Agrobacterium fabrum (strain C58 / ATCC 33970) (Agrobacterium tumefaciens (strain C58)).